The following is a 547-amino-acid chain: Chaperonin GroEL (547 aa).

Residues Thr-30–Pro-33, Lys-51, Asp-87–Thr-91, Gly-415, and Asp-495 contribute to the ATP site. Residues Pro-525–Met-547 form a disordered region. The segment covering Gly-531–Met-547 has biased composition (gly residues).

The protein belongs to the chaperonin (HSP60) family. As to quaternary structure, forms a cylinder of 14 subunits composed of two heptameric rings stacked back-to-back. Interacts with the co-chaperonin GroES.

The protein localises to the cytoplasm. It carries out the reaction ATP + H2O + a folded polypeptide = ADP + phosphate + an unfolded polypeptide.. Its function is as follows. Together with its co-chaperonin GroES, plays an essential role in assisting protein folding. The GroEL-GroES system forms a nano-cage that allows encapsulation of the non-native substrate proteins and provides a physical environment optimized to promote and accelerate protein folding. This is Chaperonin GroEL from Chromohalobacter salexigens (strain ATCC BAA-138 / DSM 3043 / CIP 106854 / NCIMB 13768 / 1H11).